The sequence spans 119 residues: MVKLRLKRIGKKKAAFYRIVATDARVKRDGEYIELIGTYNPINGYVKINYDLAYKWLLTGAQPTDTVRNLLSKEGLMNKLHNEKYVAKTTKSTKEKAATDKKAKVTKKPKTKTTTDVKK.

The segment covering 89–103 has biased composition (basic and acidic residues); that stretch reads TTKSTKEKAATDKKA. The tract at residues 89–119 is disordered; it reads TTKSTKEKAATDKKAKVTKKPKTKTTTDVKK.

This sequence belongs to the bacterial ribosomal protein bS16 family.

The protein is Small ribosomal subunit protein bS16 of Spiroplasma kunkelii.